Reading from the N-terminus, the 285-residue chain is Heterogeneous nuclear ribonucleoprotein A/B (285 aa).

The disordered stretch occupies residues Met1–Ile65. A compositionally biased stretch (low complexity) spans Glu25–Ala43. 2 consecutive RRM domains span residues Gly75–Val158 and Lys159–Glu238. Residue Ser87 is modified to Phosphoserine. Residues Lys136 and Lys208 each participate in a glycyl lysine isopeptide (Lys-Gly) (interchain with G-Cter in SUMO2) cross-link. Lys220 bears the N6-acetyllysine mark. Residues Val239–Tyr285 are disordered. Ser247 carries the phosphoserine modification. The residue at position 250 (Arg250) is a Dimethylated arginine; alternate. At Arg250 the chain carries Omega-N-methylarginine; alternate. 2 positions are modified to omega-N-methylarginine: Arg255 and Arg258. Lys271 is subject to N6-acetyllysine. Arg275 is subject to Dimethylated arginine; alternate. Arg275 is modified (omega-N-methylarginine; alternate). At Arg275 the chain carries Asymmetric dimethylarginine; alternate.

In terms of assembly, identified in a IGF2BP1-dependent mRNP granule complex containing untranslated mRNAs. Interacts with APOBEC1. As to expression, ubiquitous.

The protein localises to the nucleus. Its subcellular location is the cytoplasm. Its function is as follows. Transcriptional repressor. Binds to CArG box motifs, single-stranded and double-stranded DNA, and RNA. It may be that repression by CBF-A is a result of competitive binding of CBF, a putative positive factor, and CBF-A to the same or overlapping motifs around the CArG boxes. The chain is Heterogeneous nuclear ribonucleoprotein A/B (Hnrnpab) from Mus musculus (Mouse).